A 273-amino-acid polypeptide reads, in one-letter code: MTFDEWLGLSKLPKIEARMLLQYVSEYTRVQLLTRGGEEMPDEIRQRADRLAQRRLNGEPVAYILGVREFYGRRFTVNPNVLIPRPETEHLVEAVLARLPENGRVWDLGTGSGAVAVTVALERPDAFVRASDISTPALETARKNAADLGARVEFAHGSWFDTDMPSERQWDIIVSNPPYIENGDKHLSQGDLRFEPQIALTDFSDGLSCIRTLAQGAPDRLAEGGFLLLEHGFDQGAAVRGVLAENGFSGVEILPDLAGLDRVTLGKYMKHLK.

S-adenosyl-L-methionine-binding positions include 109–113, D132, W159, and N176; that span reads GTGSG. 176–179 serves as a coordination point for substrate; sequence NPPY.

The protein belongs to the protein N5-glutamine methyltransferase family. PrmC subfamily.

It carries out the reaction L-glutaminyl-[peptide chain release factor] + S-adenosyl-L-methionine = N(5)-methyl-L-glutaminyl-[peptide chain release factor] + S-adenosyl-L-homocysteine + H(+). In terms of biological role, methylates the class 1 translation termination release factors RF1/PrfA and RF2/PrfB on the glutamine residue of the universally conserved GGQ motif. This chain is Release factor glutamine methyltransferase, found in Neisseria gonorrhoeae (strain ATCC 700825 / FA 1090).